A 343-amino-acid polypeptide reads, in one-letter code: Ribosomal RNA small subunit methyltransferase C (343 aa).

This sequence belongs to the methyltransferase superfamily. RsmC family. Monomer.

Its subcellular location is the cytoplasm. It catalyses the reaction guanosine(1207) in 16S rRNA + S-adenosyl-L-methionine = N(2)-methylguanosine(1207) in 16S rRNA + S-adenosyl-L-homocysteine + H(+). Specifically methylates the guanine in position 1207 of 16S rRNA in the 30S particle. The polypeptide is Ribosomal RNA small subunit methyltransferase C (Shewanella sediminis (strain HAW-EB3)).